The following is a 713-amino-acid chain: Phosphoribosylformylglycinamidine synthase subunit PurL (713 aa).

The active site involves His34. Positions 37 and 73 each coordinate ATP. Glu75 lines the Mg(2+) pocket. Substrate-binding positions include 76–79 and Arg98; that span reads SHNH. The Proton acceptor role is filled by His77. Position 99 (Asp99) interacts with Mg(2+). Substrate is bound at residue Gln221. Asp249 serves as a coordination point for Mg(2+). Substrate is bound at residue 292–294; it reads ESQ. 2 residues coordinate ATP: Asp474 and Gly511. A substrate-binding site is contributed by Ser514.

The protein belongs to the FGAMS family. As to quaternary structure, monomer. Part of the FGAM synthase complex composed of 1 PurL, 1 PurQ and 2 PurS subunits.

It localises to the cytoplasm. It carries out the reaction N(2)-formyl-N(1)-(5-phospho-beta-D-ribosyl)glycinamide + L-glutamine + ATP + H2O = 2-formamido-N(1)-(5-O-phospho-beta-D-ribosyl)acetamidine + L-glutamate + ADP + phosphate + H(+). The protein operates within purine metabolism; IMP biosynthesis via de novo pathway; 5-amino-1-(5-phospho-D-ribosyl)imidazole from N(2)-formyl-N(1)-(5-phospho-D-ribosyl)glycinamide: step 1/2. Its function is as follows. Part of the phosphoribosylformylglycinamidine synthase complex involved in the purines biosynthetic pathway. Catalyzes the ATP-dependent conversion of formylglycinamide ribonucleotide (FGAR) and glutamine to yield formylglycinamidine ribonucleotide (FGAM) and glutamate. The FGAM synthase complex is composed of three subunits. PurQ produces an ammonia molecule by converting glutamine to glutamate. PurL transfers the ammonia molecule to FGAR to form FGAM in an ATP-dependent manner. PurS interacts with PurQ and PurL and is thought to assist in the transfer of the ammonia molecule from PurQ to PurL. The polypeptide is Phosphoribosylformylglycinamidine synthase subunit PurL (Ignicoccus hospitalis (strain KIN4/I / DSM 18386 / JCM 14125)).